Consider the following 649-residue polypeptide: Acetyl-coenzyme A synthetase (649 aa).

CoA contacts are provided by residues 198–201, threonine 317, and asparagine 341; that span reads RRGK. Residues 393–395, 417–422, aspartate 506, and arginine 521 contribute to the ATP site; these read GEP and DTWWQT. CoA is bound at residue serine 529. An ATP-binding site is contributed by arginine 532. Positions 543, 545, and 548 each coordinate Mg(2+). Lysine 612 carries the post-translational modification N6-acetyllysine. A disordered region spans residues 625–649; that stretch reads QPVQGDTSTLEDPTVLERLQASPAL.

This sequence belongs to the ATP-dependent AMP-binding enzyme family. Mg(2+) serves as cofactor. Post-translationally, acetylated. Deacetylation by the SIR2-homolog deacetylase activates the enzyme.

The catalysed reaction is acetate + ATP + CoA = acetyl-CoA + AMP + diphosphate. Functionally, catalyzes the conversion of acetate into acetyl-CoA (AcCoA), an essential intermediate at the junction of anabolic and catabolic pathways. AcsA undergoes a two-step reaction. In the first half reaction, AcsA combines acetate with ATP to form acetyl-adenylate (AcAMP) intermediate. In the second half reaction, it can then transfer the acetyl group from AcAMP to the sulfhydryl group of CoA, forming the product AcCoA. The chain is Acetyl-coenzyme A synthetase from Deinococcus radiodurans (strain ATCC 13939 / DSM 20539 / JCM 16871 / CCUG 27074 / LMG 4051 / NBRC 15346 / NCIMB 9279 / VKM B-1422 / R1).